The chain runs to 279 residues: Prephenate dehydratase (279 aa).

The Prephenate dehydratase domain maps to 2-178 (KIAYLGPRGS…NSTRFWLLGK (177 aa)). The 79-residue stretch at 194–272 (LALTLPDNLP…VNVRLLGNYS (79 aa)) folds into the ACT domain.

The enzyme catalyses prephenate + H(+) = 3-phenylpyruvate + CO2 + H2O. The protein operates within amino-acid biosynthesis; L-phenylalanine biosynthesis; phenylpyruvate from prephenate: step 1/1. The sequence is that of Prephenate dehydratase (pheA) from Lactococcus lactis subsp. cremoris (strain MG1363).